Consider the following 370-residue polypeptide: S-adenosylmethionine:tRNA ribosyltransferase-isomerase (370 aa).

Belongs to the QueA family. As to quaternary structure, monomer.

It localises to the cytoplasm. It carries out the reaction 7-aminomethyl-7-carbaguanosine(34) in tRNA + S-adenosyl-L-methionine = epoxyqueuosine(34) in tRNA + adenine + L-methionine + 2 H(+). The protein operates within tRNA modification; tRNA-queuosine biosynthesis. Transfers and isomerizes the ribose moiety from AdoMet to the 7-aminomethyl group of 7-deazaguanine (preQ1-tRNA) to give epoxyqueuosine (oQ-tRNA). The polypeptide is S-adenosylmethionine:tRNA ribosyltransferase-isomerase (Synechococcus sp. (strain WH7803)).